Consider the following 95-residue polypeptide: Glutamyl-tRNA(Gln) amidotransferase subunit C 1 (95 aa).

This sequence belongs to the GatC family. In terms of assembly, heterotrimer of A, B and C subunits.

The catalysed reaction is L-glutamyl-tRNA(Gln) + L-glutamine + ATP + H2O = L-glutaminyl-tRNA(Gln) + L-glutamate + ADP + phosphate + H(+). The enzyme catalyses L-aspartyl-tRNA(Asn) + L-glutamine + ATP + H2O = L-asparaginyl-tRNA(Asn) + L-glutamate + ADP + phosphate + 2 H(+). In terms of biological role, allows the formation of correctly charged Asn-tRNA(Asn) or Gln-tRNA(Gln) through the transamidation of misacylated Asp-tRNA(Asn) or Glu-tRNA(Gln) in organisms which lack either or both of asparaginyl-tRNA or glutaminyl-tRNA synthetases. The reaction takes place in the presence of glutamine and ATP through an activated phospho-Asp-tRNA(Asn) or phospho-Glu-tRNA(Gln). The polypeptide is Glutamyl-tRNA(Gln) amidotransferase subunit C 1 (gatC1) (Clostridium acetobutylicum (strain ATCC 824 / DSM 792 / JCM 1419 / IAM 19013 / LMG 5710 / NBRC 13948 / NRRL B-527 / VKM B-1787 / 2291 / W)).